A 180-amino-acid chain; its full sequence is Colicin-E5 (180 aa).

Disordered regions lie at residues 24-143 (AQTD…GSPG) and 155-180 (VTQISDKTDPGWVDDSRIQWGNKNDQ). Over residues 54–76 (ESRKKKEDNKRDAEGKLNDELAK) the composition is skewed to basic and acidic residues. Positions 74-180 (LAKNKGKIPG…RIQWGNKNDQ (107 aa)) are nuclease. A compositionally biased stretch (polar residues) spans 106–116 (NTVSNGATGTS). Basic and acidic residues predominate over residues 160–171 (DKTDPGWVDDSR).

Belongs to the colicin/pyosin nuclease family.

Functionally, colicins are polypeptide toxins produced by and active against E.coli and closely related bacteria. This colicin is an endonuclease. The chain is Colicin-E5 (col) from Escherichia coli.